Here is a 248-residue protein sequence, read N- to C-terminus: Putative amino-acid ABC transporter-binding protein PatH (248 aa).

Positions 1–21 are cleaved as a signal peptide; the sequence is MKNWIKVAVAAIALSAATVQA.

Belongs to the bacterial solute-binding protein 3 family.

Its subcellular location is the periplasm. Probably part of a binding-protein-dependent transport system for an amino acid. The sequence is that of Putative amino-acid ABC transporter-binding protein PatH (patH) from Vibrio harveyi (Beneckea harveyi).